Consider the following 227-residue polypeptide: Cytochrome c oxidase subunit 2 (227 aa).

The Mitochondrial intermembrane segment spans residues M1–S14. Residues P15 to M45 form a helical membrane-spanning segment. Over L46–Q59 the chain is Mitochondrial matrix. Residues E60–M87 form a helical membrane-spanning segment. The Mitochondrial intermembrane segment spans residues D88–I227. Cu cation is bound by residues H161, C196, E198, C200, H204, and M207. A Mg(2+)-binding site is contributed by E198.

Belongs to the cytochrome c oxidase subunit 2 family. Component of the cytochrome c oxidase (complex IV, CIV), a multisubunit enzyme composed of 14 subunits. The complex is composed of a catalytic core of 3 subunits MT-CO1, MT-CO2 and MT-CO3, encoded in the mitochondrial DNA, and 11 supernumerary subunits COX4I, COX5A, COX5B, COX6A, COX6B, COX6C, COX7A, COX7B, COX7C, COX8 and NDUFA4, which are encoded in the nuclear genome. The complex exists as a monomer or a dimer and forms supercomplexes (SCs) in the inner mitochondrial membrane with NADH-ubiquinone oxidoreductase (complex I, CI) and ubiquinol-cytochrome c oxidoreductase (cytochrome b-c1 complex, complex III, CIII), resulting in different assemblies (supercomplex SCI(1)III(2)IV(1) and megacomplex MCI(2)III(2)IV(2)). Found in a complex with TMEM177, COA6, COX18, COX20, SCO1 and SCO2. Interacts with TMEM177 in a COX20-dependent manner. Interacts with COX20. Interacts with COX16. Cu cation is required as a cofactor.

The protein resides in the mitochondrion inner membrane. The enzyme catalyses 4 Fe(II)-[cytochrome c] + O2 + 8 H(+)(in) = 4 Fe(III)-[cytochrome c] + 2 H2O + 4 H(+)(out). Component of the cytochrome c oxidase, the last enzyme in the mitochondrial electron transport chain which drives oxidative phosphorylation. The respiratory chain contains 3 multisubunit complexes succinate dehydrogenase (complex II, CII), ubiquinol-cytochrome c oxidoreductase (cytochrome b-c1 complex, complex III, CIII) and cytochrome c oxidase (complex IV, CIV), that cooperate to transfer electrons derived from NADH and succinate to molecular oxygen, creating an electrochemical gradient over the inner membrane that drives transmembrane transport and the ATP synthase. Cytochrome c oxidase is the component of the respiratory chain that catalyzes the reduction of oxygen to water. Electrons originating from reduced cytochrome c in the intermembrane space (IMS) are transferred via the dinuclear copper A center (CU(A)) of subunit 2 and heme A of subunit 1 to the active site in subunit 1, a binuclear center (BNC) formed by heme A3 and copper B (CU(B)). The BNC reduces molecular oxygen to 2 water molecules using 4 electrons from cytochrome c in the IMS and 4 protons from the mitochondrial matrix. This chain is Cytochrome c oxidase subunit 2 (MT-CO2), found in Zelotomys hildegardeae (Hildegarde's broad-headed mouse).